Here is an 849-residue protein sequence, read N- to C-terminus: DNA mismatch repair protein MutS (849 aa).

602–609 (GPNMSGKS) provides a ligand contact to ATP.

Belongs to the DNA mismatch repair MutS family.

In terms of biological role, this protein is involved in the repair of mismatches in DNA. It is possible that it carries out the mismatch recognition step. This protein has a weak ATPase activity. The sequence is that of DNA mismatch repair protein MutS from Streptococcus mutans serotype c (strain ATCC 700610 / UA159).